A 627-amino-acid chain; its full sequence is Pescadillo homolog (627 aa).

One can recognise a BRCT domain in the interval 321 to 414 (RLRTLFKGLK…QLLPTNKYFI (94 aa)). Disordered stretches follow at residues 450 to 469 (HVQSDDDSEDEAQEEEETVD), 488 to 562 (YKKF…LQAR), and 595 to 627 (TIEASEKEARKTAKREARKEAAAAAAKASKLGK). Phosphoserine occurs at positions 453 and 457. Composition is skewed to acidic residues over residues 454–469 (DDDSEDEAQEEEETVD) and 497–521 (VNEDEEDPEDDDDNEDDDEEEEELD). The stretch at 507–538 (DDDNEDDDEEEEELDEKTKRLQEEKQKMSVQS) forms a coiled coil. Residues 522 to 533 (EKTKRLQEEKQK) are compositionally biased toward basic and acidic residues. The segment covering 540 to 549 (KVHKVNKRQV) has biased composition (basic residues). 2 stretches are compositionally biased toward basic and acidic residues: residues 550–559 (HKAEVDEHRL) and 595–615 (TIEASEKEARKTAKREARKEA). A coiled-coil region spans residues 582–625 (KEKEEWLLRKKRRTIEASEKEARKTAKREARKEAAAAAAKASKL). Low complexity predominate over residues 616 to 627 (AAAAAKASKLGK).

The protein belongs to the pescadillo family.

The protein resides in the nucleus. The protein localises to the nucleolus. Its subcellular location is the nucleoplasm. Its function is as follows. Required for maturation of ribosomal RNAs and formation of the large ribosomal subunit. The chain is Pescadillo homolog from Drosophila sechellia (Fruit fly).